A 284-amino-acid polypeptide reads, in one-letter code: MSVPLLEFHQVGFRYPNTPEPVLRDCSFTLEAGRKVALLGLNGSGKSTLFYLAAALYRRDRGEIYCQGQRLVHQPQRLRQWRQRIGLAFQDPEQQLVAATVAEDISYGLCNLGLSPPEVAARLHQTLQEFDLVALADRPLHHLSLGQKRRVALAGVMALAPTLLLLDEPTTYLDYQQRQQLRELLEKIHQQGTTIVIATHDLDFAYGWADWIMILVNGQVSVSDRASHVFGQWPTFAPELGTPTLLGLWQQLPPAWRQHRPFPRTVTEFSRELGERFRHLGDEC.

Positions 6–242 (LEFHQVGFRY…WPTFAPELGT (237 aa)) constitute an ABC transporter domain. Position 40–47 (40–47 (GLNGSGKS)) interacts with ATP.

The protein belongs to the ABC transporter superfamily.

The protein resides in the cell inner membrane. Probably part of an ABC transporter complex. Responsible for energy coupling to the transport system. The protein is Putative ABC transporter ATP-binding protein tll2439 of Thermosynechococcus vestitus (strain NIES-2133 / IAM M-273 / BP-1).